We begin with the raw amino-acid sequence, 536 residues long: MACSWTFLWLLWIAMVAVLLFFLRGPLKISESLESVSATSYFNNLTPKFYVALTGTSSLVSGIILIFEWWYFKNNAGVEQGEDEGSDNEESIDNPKTVPECKVWRNPMALFRAAEYNRFRKETNSEPLTYYDMNLSAQDHQSLFMCDEDQGRAEYEIMQVAWRERESEQRIQTARTALAINSECASALVLLAEEDTETVAQAENVLRRALRAIENTLSTYSNNQIASYGQNGDTVRKRDLTIQTYIKRRLAMCARKQGRLREAIKGFRDLSREQSLSTLLSVQDNLIEACLEVQAYADVQNLLVRYDGYGTSCSYDQREPRSAAMSYTSALLKVRAVAENFRCPSESSVRRGLSSAEQTAIEALTRAMEFNPHVPPYLLEIRAMIMPPEHFLKRGDSEALAYAFFHIQHWKRIDGALQLLSIVWKDFVPKVNKDTHAFSSQLESADKELLPAWHEQSAFPQTESTLGMLIQTFACLAICILAVLSQQVPSSYGEMLRQIVTSGVQMYENSMNTFSQWAPNNIIPYLASKPVSVPEI.

The next 2 membrane-spanning stretches (helical) occupy residues 3–23 (CSWTFLWLLWIAMVAVLLFFL) and 49–69 (FYVALTGTSSLVSGIILIFEW). The stretch at 192-219 (AEEDTETVAQAENVLRRALRAIENTLST) forms a coiled coil. A helical membrane pass occupies residues 464–484 (STLGMLIQTFACLAICILAVL).

This sequence belongs to the ST7 family.

The protein localises to the membrane. In Caenorhabditis briggsae, this protein is Protein ST7 homolog.